The primary structure comprises 347 residues: Eukaryotic translation initiation factor 3 subunit H (347 aa).

The MPN domain maps to 1–142 (MKIMKHCSQT…LRAFRLSPRF (142 aa)).

This sequence belongs to the eIF-3 subunit H family. As to quaternary structure, component of the eukaryotic translation initiation factor 3 (eIF-3) complex.

Its subcellular location is the cytoplasm. Its function is as follows. Component of the eukaryotic translation initiation factor 3 (eIF-3) complex, which is involved in protein synthesis of a specialized repertoire of mRNAs and, together with other initiation factors, stimulates binding of mRNA and methionyl-tRNAi to the 40S ribosome. The eIF-3 complex specifically targets and initiates translation of a subset of mRNAs involved in cell proliferation. The chain is Eukaryotic translation initiation factor 3 subunit H from Neosartorya fischeri (strain ATCC 1020 / DSM 3700 / CBS 544.65 / FGSC A1164 / JCM 1740 / NRRL 181 / WB 181) (Aspergillus fischerianus).